The chain runs to 406 residues: MANPKLVLAYSGGLDTSVAIKWLQERGYDVIACCLDLGEGKDLDFVKEKALKVGAMKSYVIDVKDEFANEYALIALQANALYEGKYPLVSALSRPLIAKKLVEIAELEGAVAVAHGCTGKGNDQVRFEVSIKALNPDLDVIAPVREWSWSREEEIEYAKKHGIPIPVDLDSPFSIDQNLWGRSNECGILEDPWAAPPEEAYELTASLENAPDVPDVIEIGFEQGVPVTLNGKAYPLAQLILELNALAGKHGVGRIDHVENRLVGIKSREVYECPGAITLIKAHKELEDLTLVREVAHFKPIIEQKIAEVIYNGLWFSPLKDALVAFLKETQKNVTGVVRVKLFKGHAIVEGRKSPFSLYDEKLATYTSEDEFDHQAAVGFISLYGLPTKVHSIVNKQNKASVPTGQ.

9–17 (AYSGGLDTS) serves as a coordination point for ATP. Y86 contributes to the L-citrulline binding site. G116 serves as a coordination point for ATP. Residues T118, N122, and D123 each contribute to the L-aspartate site. Residue N122 participates in L-citrulline binding. Residues R126, S174, S183, E259, and Y271 each contribute to the L-citrulline site.

Belongs to the argininosuccinate synthase family. Type 1 subfamily. As to quaternary structure, homotetramer.

It is found in the cytoplasm. The catalysed reaction is L-citrulline + L-aspartate + ATP = 2-(N(omega)-L-arginino)succinate + AMP + diphosphate + H(+). It functions in the pathway amino-acid biosynthesis; L-arginine biosynthesis; L-arginine from L-ornithine and carbamoyl phosphate: step 2/3. This is Argininosuccinate synthase from Geobacillus kaustophilus (strain HTA426).